The chain runs to 91 residues: Probable Fe(2+)-trafficking protein (91 aa).

Belongs to the Fe(2+)-trafficking protein family.

In terms of biological role, could be a mediator in iron transactions between iron acquisition and iron-requiring processes, such as synthesis and/or repair of Fe-S clusters in biosynthetic enzymes. In Mannheimia succiniciproducens (strain KCTC 0769BP / MBEL55E), this protein is Probable Fe(2+)-trafficking protein.